The sequence spans 236 residues: Lipoprotein B (236 aa).

The N-terminal stretch at 1–27 (MNKKYFKKYSSILIFSMSILAPMTLAS) is a signal peptide. Cys28 is lipidated: N-palmitoyl cysteine. A lipid anchor (S-diacylglycerol cysteine) is attached at Cys28. Disordered regions lie at residues 35–112 (EKDK…KSNV) and 134–236 (SEKQ…GDAF). Residues 43–60 (STNLSEPNKSNTSKTNTF) show a composition bias toward polar residues. Over residues 61–74 (QDKKDSTNKIDSQE) the composition is skewed to basic and acidic residues. 2 stretches are compositionally biased toward polar residues: residues 75-112 (SSKT…KSNV) and 143-157 (NASS…NTLK). Residues 158 to 175 (NQDKTKQENDQFKQESKD) show a composition bias toward basic and acidic residues. Positions 193–212 (VISSQSTTRLEMPKNDQSNS) are enriched in polar residues. The span at 215 to 228 (EDNKKSPESPKWWE) shows a compositional bias: basic and acidic residues.

The protein belongs to the M.pulmonis LipAB lipoprotein family.

Its subcellular location is the cell membrane. The polypeptide is Lipoprotein B (lipB) (Mycoplasmopsis pulmonis (strain UAB CTIP) (Mycoplasma pulmonis)).